The sequence spans 143 residues: Flagellar assembly factor FliW (143 aa).

It belongs to the FliW family. As to quaternary structure, interacts with translational regulator CsrA and flagellin(s).

The protein localises to the cytoplasm. Acts as an anti-CsrA protein, binds CsrA and prevents it from repressing translation of its target genes, one of which is flagellin. Binds to flagellin and participates in the assembly of the flagellum. The chain is Flagellar assembly factor FliW from Bacillus licheniformis (strain ATCC 14580 / DSM 13 / JCM 2505 / CCUG 7422 / NBRC 12200 / NCIMB 9375 / NCTC 10341 / NRRL NRS-1264 / Gibson 46).